The sequence spans 301 residues: Probable aspartoacylase (301 aa).

Residues H13 and E16 each contribute to the Zn(2+) site. Substrate contacts are provided by residues R54 and 61–62; that span reads NR. H105 contacts Zn(2+). The substrate site is built by E163 and Y273.

This sequence belongs to the AspA/AstE family. Aspartoacylase subfamily. It depends on Zn(2+) as a cofactor.

It carries out the reaction an N-acyl-L-aspartate + H2O = a carboxylate + L-aspartate. This Prochlorococcus marinus (strain AS9601) protein is Probable aspartoacylase.